The following is a 542-amino-acid chain: Phenylalanine--tRNA ligase beta subunit (542 aa).

Positions 269–344 (LRRYTVSVSA…MTIGYDKLSP (76 aa)) constitute a B5 domain. Mg(2+)-binding residues include Asp-322, Asp-328, Glu-331, and Glu-332.

The protein belongs to the phenylalanyl-tRNA synthetase beta subunit family. Type 2 subfamily. As to quaternary structure, tetramer of two alpha and two beta subunits. The cofactor is Mg(2+).

It is found in the cytoplasm. The enzyme catalyses tRNA(Phe) + L-phenylalanine + ATP = L-phenylalanyl-tRNA(Phe) + AMP + diphosphate + H(+). This chain is Phenylalanine--tRNA ligase beta subunit, found in Sulfolobus acidocaldarius (strain ATCC 33909 / DSM 639 / JCM 8929 / NBRC 15157 / NCIMB 11770).